The chain runs to 158 residues: 2-C-methyl-D-erythritol 2,4-cyclodiphosphate synthase (158 aa).

Asp8 and His10 together coordinate a divalent metal cation. 4-CDP-2-C-methyl-D-erythritol 2-phosphate contacts are provided by residues 8 to 10 (DVH) and 34 to 35 (HS). His42 contributes to the a divalent metal cation binding site. 4-CDP-2-C-methyl-D-erythritol 2-phosphate is bound by residues 56–58 (DIG), 61–65 (FPDTD), 100–106 (AQRPKMA), 132–135 (TTEE), Phe139, and Arg142.

This sequence belongs to the IspF family. In terms of assembly, homotrimer. It depends on a divalent metal cation as a cofactor.

It carries out the reaction 4-CDP-2-C-methyl-D-erythritol 2-phosphate = 2-C-methyl-D-erythritol 2,4-cyclic diphosphate + CMP. Its pathway is isoprenoid biosynthesis; isopentenyl diphosphate biosynthesis via DXP pathway; isopentenyl diphosphate from 1-deoxy-D-xylulose 5-phosphate: step 4/6. In terms of biological role, involved in the biosynthesis of isopentenyl diphosphate (IPP) and dimethylallyl diphosphate (DMAPP), two major building blocks of isoprenoid compounds. Catalyzes the conversion of 4-diphosphocytidyl-2-C-methyl-D-erythritol 2-phosphate (CDP-ME2P) to 2-C-methyl-D-erythritol 2,4-cyclodiphosphate (ME-CPP) with a corresponding release of cytidine 5-monophosphate (CMP). The protein is 2-C-methyl-D-erythritol 2,4-cyclodiphosphate synthase of Pelobacter propionicus (strain DSM 2379 / NBRC 103807 / OttBd1).